The sequence spans 270 residues: Formamidopyrimidine-DNA glycosylase (270 aa).

Residue proline 2 is the Schiff-base intermediate with DNA of the active site. The active-site Proton donor is the glutamate 3. The active-site Proton donor; for beta-elimination activity is the lysine 58. The DNA site is built by histidine 91, arginine 109, and arginine 151. An FPG-type zinc finger spans residues 236 to 270; sequence QVYGKTGQQCPSCETPLKAVKLAARASVYCPECQS. Arginine 260 functions as the Proton donor; for delta-elimination activity in the catalytic mechanism.

Belongs to the FPG family. Monomer. Zn(2+) serves as cofactor.

The enzyme catalyses Hydrolysis of DNA containing ring-opened 7-methylguanine residues, releasing 2,6-diamino-4-hydroxy-5-(N-methyl)formamidopyrimidine.. The catalysed reaction is 2'-deoxyribonucleotide-(2'-deoxyribose 5'-phosphate)-2'-deoxyribonucleotide-DNA = a 3'-end 2'-deoxyribonucleotide-(2,3-dehydro-2,3-deoxyribose 5'-phosphate)-DNA + a 5'-end 5'-phospho-2'-deoxyribonucleoside-DNA + H(+). Functionally, involved in base excision repair of DNA damaged by oxidation or by mutagenic agents. Acts as a DNA glycosylase that recognizes and removes damaged bases. Has a preference for oxidized purines, such as 7,8-dihydro-8-oxoguanine (8-oxoG). Has AP (apurinic/apyrimidinic) lyase activity and introduces nicks in the DNA strand. Cleaves the DNA backbone by beta-delta elimination to generate a single-strand break at the site of the removed base with both 3'- and 5'-phosphates. In Psychromonas ingrahamii (strain DSM 17664 / CCUG 51855 / 37), this protein is Formamidopyrimidine-DNA glycosylase.